The following is a 441-amino-acid chain: Chitinase-like protein Idgf3 (441 aa).

The first 23 residues, 1–23 (MSGSLWLSLALSLAVLAQFKVSA), serve as a signal peptide directing secretion. The 417-residue stretch at 25–441 (PNLVCFYDSQ…MLRAIKYRLL (417 aa)) folds into the GH18 domain. Cys-29 and Cys-56 are disulfide-bonded. Asn-221 carries an N-linked (GlcNAc...) asparagine glycan. Residues 310-331 (GDSGMPVVSSTQGPAPAGPQSK) form a disordered region. A disulfide bridge links Cys-342 with Cys-425.

The protein belongs to the glycosyl hydrolase 18 family. IDGF subfamily. Post-translationally, glycosylated.

The protein localises to the secreted. Cooperates with insulin-like peptides to stimulate the proliferation, polarization and motility of imaginal disk cells. May act by stabilizing the binding of insulin-like peptides to its receptor through a simultaneous interaction with both molecules to form a multiprotein signaling complex. The protein is Chitinase-like protein Idgf3 (Idgf3) of Drosophila simulans (Fruit fly).